The following is a 442-amino-acid chain: Yes-associated protein homolog 1 (442 aa).

A compositionally biased stretch (basic residues) spans 1–10 (MASKSIHKKH). Residues 1-84 (MASKSIHKKH…GSVDESSRTA (84 aa)) are disordered. Composition is skewed to polar residues over residues 13-22 (NSQQDKNQFS) and 55-71 (LPSS…SSAH). At Ser104 the chain carries Phosphoserine. A compositionally biased stretch (polar residues) spans 108-120 (LHTSVNNGQSSAT). The interval 108 to 136 (LHTSVNNGQSSATVPHPSHHNVHHQHSKS) is disordered. Over residues 124-134 (PSHHNVHHQHS) the composition is skewed to basic residues. The WW domain occupies 203 to 236 (LPMPQGWEMCYDSDGVRYFKDHNSKTTTWDDPRL).

The protein belongs to the YAP1 family. Highly divergent. As to quaternary structure, interacts (via WW domain) with wts-1 (via N-terminus). Interacts (via WW domain) with egl-44; the interaction may regulate transcription. In terms of tissue distribution, expressed in epithelia, hypodermis, muscles, pharynx, intestine, gonadal sheath cells, vulva, spermatheca and in excretory tissue.

It is found in the cytoplasm. It localises to the nucleus. Its subcellular location is the cell projection. The protein localises to the cilium. The protein resides in the cytoskeleton. It is found in the cilium axoneme. Plays a role in thermal stress response and in aging. This Caenorhabditis elegans protein is Yes-associated protein homolog 1.